Here is a 291-residue protein sequence, read N- to C-terminus: RPE-retinal G protein-coupled receptor (291 aa).

Residues 1 to 15 (MAATRALPAGLGELE) lie on the Extracellular side of the membrane. The helical transmembrane segment at 16-36 (VLAVGTVLLMEALSGISLNGL) threads the bilayer. The Cytoplasmic segment spans residues 37 to 52 (TIFSFCKTPDLRTPSN). A helical membrane pass occupies residues 53–73 (LLVLSLALADTGISLNALVAA). Residues 74–91 (VSSLLRRWPHGSEGCQVH) lie on the Extracellular side of the membrane. A disulfide bridge links cysteine 88 with cysteine 162. Residues 92–112 (GFQGFATALASICGSAAVAWG) traverse the membrane as a helical segment. At 113–130 (RYHHYCTRRQLAWDTAIP) the chain is on the cytoplasmic side. Residues 131-151 (LVLFVWMSSAFWASLPLMGWG) traverse the membrane as a helical segment. The Extracellular portion of the chain corresponds to 152–175 (HYDYEPVGTCCTLDYSRGDRNFIS). A helical membrane pass occupies residues 176-196 (FLFTMAFFNFLVPLFITHTSY). Residues 197 to 219 (RFMEQKFSRSGHLPVNTTLPGRM) are Cytoplasmic-facing. Residues 220–240 (LLLGWGPYALLYLYAAIADVS) form a helical membrane-spanning segment. Residues 241 to 247 (FISPKLQ) are Extracellular-facing. Residues 248–268 (MVPALIAKTMPTINAINYALH) form a helical membrane-spanning segment. An N6-(retinylidene)lysine modification is found at lysine 255. Residues 269–291 (REMVCRGTWQCLSPQKSKKDRTQ) are Cytoplasmic-facing.

Belongs to the G-protein coupled receptor 1 family. Opsin subfamily. Covalently binds all-trans- and 11-cis-retinal.

Its subcellular location is the membrane. Functionally, receptor for all-trans- and 11-cis-retinal. Binds preferentially to the former and may catalyze the isomerization of the chromophore by a retinochrome-like mechanism. This Mus musculus (Mouse) protein is RPE-retinal G protein-coupled receptor (Rgr).